Here is a 164-residue protein sequence, read N- to C-terminus: Transcriptional regulator MraZ (164 aa).

2 SpoVT-AbrB domains span residues 7–63 (REQH…EPAV) and 92–135 (LDQL…NPDR).

It belongs to the MraZ family. Forms oligomers.

The protein resides in the cytoplasm. Its subcellular location is the nucleoid. This Chlorobaculum parvum (strain DSM 263 / NCIMB 8327) (Chlorobium vibrioforme subsp. thiosulfatophilum) protein is Transcriptional regulator MraZ.